We begin with the raw amino-acid sequence, 168 residues long: Microtubule-associated protein Jupiter (168 aa).

The span at 1 to 14 (MISNFDCTDNQASS) shows a compositional bias: polar residues. A disordered region spans residues 1–33 (MISNFDCTDNQASSKVLRPPGGGSSDIFGSEMP). Position 24 is a phosphoserine (Ser-24). Residue Thr-35 is modified to Phosphothreonine. Residues 76–87 (RGQKTVDSHSRL) are compositionally biased toward basic and acidic residues. Disordered stretches follow at residues 76–106 (RGQK…KSSI) and 124–168 (NGHY…GAGK). Residues Thr-92 and Thr-96 each carry the phosphothreonine modification. Phosphoserine is present on residues Ser-105, Ser-133, and Ser-144. The segment covering 131-144 (SGSVSSASSSVSSS) has biased composition (low complexity). A compositionally biased stretch (polar residues) spans 145–155 (TENLKMNSGSR).

It belongs to the MAP Jupiter family.

Its subcellular location is the nucleus. The protein localises to the cytoplasm. It is found in the cytoskeleton. It localises to the spindle. Binds to all microtubule populations. The polypeptide is Microtubule-associated protein Jupiter (Drosophila simulans (Fruit fly)).